The chain runs to 673 residues: ATP-dependent DNA helicase Rep (673 aa).

Residues 1–280 (MRLNPGQQQA…IKLEQNYRSS (280 aa)) enclose the UvrD-like helicase ATP-binding domain. Residues 22–29 (AGAGSGKT) and Arg278 contribute to the ATP site. The region spanning 281–562 (GRILKAANIL…QLMTLHASKG (282 aa)) is the UvrD-like helicase C-terminal domain.

The protein belongs to the helicase family. UvrD subfamily. Homodimer in association with DNA.

It catalyses the reaction Couples ATP hydrolysis with the unwinding of duplex DNA by translocating in the 3'-5' direction.. The enzyme catalyses ATP + H2O = ADP + phosphate + H(+). Its activity is regulated as follows. Binding to DNA induces dimerization, which is required for DNA helicase activity. Helicase activity is stimulated by PriC. Its function is as follows. Rep helicase is a single-stranded (ss)DNA-dependent ATPase involved in DNA replication; it can initiate unwinding at a nick in the DNA. It binds to ssDNA and acts in a progressive fashion along the DNA in the 3' to 5' direction. Binds double-stranded (ds)DNA with a 5' ss- but not 3' ss-extension and forked structures with either lagging or leading ssDNA. Part of the PriC-Rep pathway for restart of stalled replication forks, which reloads the DnaB replicative helicase on sites other than the origin of replication. In Escherichia coli (strain K12), this protein is ATP-dependent DNA helicase Rep.